Reading from the N-terminus, the 437-residue chain is MANPVVAIVGRPNVGKSTLFNRIAGERIAIVEDTPGVTRDRLYAHGEWLGKNFSMIDTGGIEMSDQPLLTQIRQQAEIAIEEADVIIMVVNVENGVTDADEQVAQILYRSNKPVVLAVNKVDNPERRLDVYDFYRLGLGEPYPVSSVHGVGLGDMLDAVIENFAEKDAEEEDDRIRFSFIGRPNVGKSSLVNAILGENRVIVSDMAGTTRDAINTQFTAKDGREFTMVDTAGIKKKGKLYENTERYALMRSMRAIDDSDVVLVVLNAEEGIRELDKHIAGYAHEAGRAVIIVVNKWDTIPDRDQRTMTDFTNLIRHEFQYLSYAPIVFVSAKTKQRLSRLPEMIEEAYDHQHRRIQSAVLNDVLMDALAANPTPSSNGRRLRVYYATQVAVAPPTFVIFVNDPDLMHFSYARYLENRIRAAFDFTGTPIRLIKRRRK.

EngA-type G domains lie at 4-167 (PVVA…AEKD) and 175-352 (IRFS…DHQH). Residues 10 to 17 (GRPNVGKS), 57 to 61 (DTGGI), 119 to 122 (NKVD), 181 to 188 (GRPNVGKS), 229 to 233 (DTAGI), and 294 to 297 (NKWD) each bind GTP. Positions 353-437 (RRIQSAVLND…PIRLIKRRRK (85 aa)) constitute a KH-like domain.

Belongs to the TRAFAC class TrmE-Era-EngA-EngB-Septin-like GTPase superfamily. EngA (Der) GTPase family. As to quaternary structure, associates with the 50S ribosomal subunit.

GTPase that plays an essential role in the late steps of ribosome biogenesis. In Limosilactobacillus fermentum (strain NBRC 3956 / LMG 18251) (Lactobacillus fermentum), this protein is GTPase Der.